We begin with the raw amino-acid sequence, 245 residues long: Probable septum site-determining protein MinC (245 aa).

A compositionally biased stretch (basic and acidic residues) spans 112–132 (ARERPLESAEPVAPKKPEKPP). Residues 112-140 (ARERPLESAEPVAPKKPEKPPEPTVKPTR) form a disordered region.

This sequence belongs to the MinC family. Interacts with MinD and FtsZ.

Its function is as follows. Cell division inhibitor that blocks the formation of polar Z ring septums. Rapidly oscillates between the poles of the cell to destabilize FtsZ filaments that have formed before they mature into polar Z rings. Prevents FtsZ polymerization. This is Probable septum site-determining protein MinC from Pseudomonas fluorescens (strain Pf0-1).